The chain runs to 1622 residues: ABC transporter C family member 1 (1622 aa).

Helical transmembrane passes span F37–I57, F73–V93, E110–V130, F145–K165, Y174–F194, A336–C356, V440–I460, F527–L547, and F557–I577. The ABC transmembrane type-1 1 domain occupies F302 to N582. The 225-residue stretch at I614–N838 folds into the ABC transporter 1 domain. An ATP-binding site is contributed by G649–T656. The disordered stretch occupies residues A852–E876. Polar residues predominate over residues D855–Q871. 6 helical membrane passes run A909–F929, P951–I971, A1027–I1049, L1053–Y1072, L1138–V1158, and S1172–L1192. The ABC transmembrane type-1 2 domain maps to V916–N1200. The tract at residues W1231–Y1246 is interaction with calmodulin and FKP42/TWD1. An ABC transporter 2 domain is found at I1237–Q1471. G1271–S1278 lines the ATP pocket.

Belongs to the ABC transporter superfamily. ABCC family. Conjugate transporter (TC 3.A.1.208) subfamily. As to quaternary structure, interacts with calmodulin (CaM), PAS1 and FKBP42/TWD1. In terms of tissue distribution, ubiquitous, with higher levels in leaves and stems and lower levels in roots. Localized in the root apex, root hair tips and root epidermis.

It is found in the vacuole membrane. The enzyme catalyses ATP + H2O + xenobioticSide 1 = ADP + phosphate + xenobioticSide 2.. Its function is as follows. Pump for glutathione S-conjugates. Mediates the transport of S-(2,4-dinitrophenyl)-glutathione (DNP-GS), GSSG, cyanidin 3-glucoside-GS (C3G-GS) and metolachlor-GS (MOC-GS). This is ABC transporter C family member 1 (ABCC1) from Arabidopsis thaliana (Mouse-ear cress).